Reading from the N-terminus, the 221-residue chain is Orotidine 5'-phosphate decarboxylase (221 aa).

Substrate is bound by residues Asp-12, Lys-34, 60 to 69, Ser-117, 170 to 180, Gly-193, and Arg-194; these read DFKVADIPNT and PGVGAQGGKAS. Lys-62 functions as the Proton donor in the catalytic mechanism.

It belongs to the OMP decarboxylase family. Type 1 subfamily. In terms of assembly, homodimer.

It carries out the reaction orotidine 5'-phosphate + H(+) = UMP + CO2. The protein operates within pyrimidine metabolism; UMP biosynthesis via de novo pathway; UMP from orotate: step 2/2. In terms of biological role, catalyzes the decarboxylation of orotidine 5'-monophosphate (OMP) to uridine 5'-monophosphate (UMP). The chain is Orotidine 5'-phosphate decarboxylase from Methanosarcina barkeri (strain Fusaro / DSM 804).